Reading from the N-terminus, the 509-residue chain is Maturase K (509 aa).

This sequence belongs to the intron maturase 2 family. MatK subfamily.

It is found in the plastid. It localises to the chloroplast. Its function is as follows. Usually encoded in the trnK tRNA gene intron. Probably assists in splicing its own and other chloroplast group II introns. This is Maturase K from Thujopsis dolabrata (Hiba arborvitae).